A 161-amino-acid chain; its full sequence is MNDAFAGLPYRPCVGVMLVNSQGRVFVGRRIDDKDGVAWQMPQGGIDDGEELHPAALRELSEETGVAAELVTIIAESREEHLYDLPDELIGKLWGGQYRGQRQKWLLLRFAGEDTDIRLDAHDPAEFSEWRWVEPEQLPDLIVPFKRRVYRQVVDEFRDLI.

The 147-residue stretch at 9 to 155 (PYRPCVGVML…KRRVYRQVVD (147 aa)) folds into the Nudix hydrolase domain. Residues 44–65 (GGIDDGEELHPAALRELSEETG) carry the Nudix box motif.

The protein belongs to the Nudix hydrolase family. RppH subfamily. A divalent metal cation serves as cofactor.

In terms of biological role, accelerates the degradation of transcripts by removing pyrophosphate from the 5'-end of triphosphorylated RNA, leading to a more labile monophosphorylated state that can stimulate subsequent ribonuclease cleavage. The chain is RNA pyrophosphohydrolase from Novosphingobium aromaticivorans (strain ATCC 700278 / DSM 12444 / CCUG 56034 / CIP 105152 / NBRC 16084 / F199).